The chain runs to 254 residues: Small ribosomal subunit protein uS5 (254 aa).

A compositionally biased stretch (polar residues) spans 1-10 (MSAPEAQQQK). Positions 1-34 (MSAPEAQQQKRGGFGGRNRGRPNRRGPRNTEEKG) are disordered. Serine 2 bears the N-acetylserine mark. Position 11 is an asymmetric dimethylarginine; by HMT1; alternate (arginine 11). Arginine 11 carries the omega-N-methylarginine; by HMT1; alternate modification. Arginine 17 is modified (omega-N-methylarginine; by HMT1). The span at 18 to 27 (NRGRPNRRGP) shows a compositional bias: basic residues. Lysine 33 participates in a covalent cross-link: Glycyl lysine isopeptide (Lys-Gly) (interchain with G-Cter in ubiquitin). Residues 76-139 (LQDEVMNIKP…IIAKLSVIPI (64 aa)) enclose the S5 DRBM domain.

This sequence belongs to the universal ribosomal protein uS5 family. In terms of assembly, component of the small ribosomal subunit (SSU). Mature yeast ribosomes consist of a small (40S) and a large (60S) subunit. The 40S small subunit contains 1 molecule of ribosomal RNA (18S rRNA) and 33 different proteins (encoded by 57 genes). The large 60S subunit contains 3 rRNA molecules (25S, 5.8S and 5S rRNA) and 46 different proteins (encoded by 81 genes). Interacts with snoRNA U3. Interacts with MPP10. Component of the ribosomal small subunit (SSU) processome composed of at least 40 protein subunits and snoRNA U3. N-terminally acetylated by acetyltransferase NatA.

It localises to the cytoplasm. Its subcellular location is the nucleus. The protein localises to the nucleolus. In terms of biological role, component of the ribosome, a large ribonucleoprotein complex responsible for the synthesis of proteins in the cell. The small ribosomal subunit (SSU) binds messenger RNAs (mRNAs) and translates the encoded message by selecting cognate aminoacyl-transfer RNA (tRNA) molecules. The large subunit (LSU) contains the ribosomal catalytic site termed the peptidyl transferase center (PTC), which catalyzes the formation of peptide bonds, thereby polymerizing the amino acids delivered by tRNAs into a polypeptide chain. The nascent polypeptides leave the ribosome through a tunnel in the LSU and interact with protein factors that function in enzymatic processing, targeting, and the membrane insertion of nascent chains at the exit of the ribosomal tunnel. uS5 is important for the assembly and function of the 40S ribosomal subunit. Mutations in this protein affects the control of translational fidelity. Involved in nucleolar processing of pre-18S ribosomal RNA and ribosome assembly. In Saccharomyces cerevisiae (strain ATCC 204508 / S288c) (Baker's yeast), this protein is Small ribosomal subunit protein uS5.